We begin with the raw amino-acid sequence, 310 residues long: tRNA-cytidine(32) 2-sulfurtransferase (310 aa).

The short motif at 45 to 50 (SGGKDS) is the PP-loop motif element. Residues C120, C123, and C211 each contribute to the [4Fe-4S] cluster site.

It belongs to the TtcA family. As to quaternary structure, homodimer. Requires Mg(2+) as cofactor. The cofactor is [4Fe-4S] cluster.

The protein resides in the cytoplasm. The enzyme catalyses cytidine(32) in tRNA + S-sulfanyl-L-cysteinyl-[cysteine desulfurase] + AH2 + ATP = 2-thiocytidine(32) in tRNA + L-cysteinyl-[cysteine desulfurase] + A + AMP + diphosphate + H(+). It participates in tRNA modification. Functionally, catalyzes the ATP-dependent 2-thiolation of cytidine in position 32 of tRNA, to form 2-thiocytidine (s(2)C32). The sulfur atoms are provided by the cysteine/cysteine desulfurase (IscS) system. This is tRNA-cytidine(32) 2-sulfurtransferase from Shewanella putrefaciens (strain CN-32 / ATCC BAA-453).